We begin with the raw amino-acid sequence, 207 residues long: Small ribosomal subunit protein uS4A (207 aa).

Residues 98-158 (TRLDNVAYRL…EKSKSSAKFK (61 aa)) enclose the S4 RNA-binding domain.

Belongs to the universal ribosomal protein uS4 family. Part of the 30S ribosomal subunit. Contacts protein S5. The interaction surface between S4 and S5 is involved in control of translational fidelity.

One of the primary rRNA binding proteins, it binds directly to 16S rRNA where it nucleates assembly of the body of the 30S subunit. Functionally, with S5 and S12 plays an important role in translational accuracy. The polypeptide is Small ribosomal subunit protein uS4A (Alkaliphilus oremlandii (strain OhILAs) (Clostridium oremlandii (strain OhILAs))).